A 123-amino-acid polypeptide reads, in one-letter code: Small ribosomal subunit protein uS13 (123 aa).

The span at 99–113 (RGQRTHTNARTRKGG) shows a compositional bias: basic residues. A disordered region spans residues 99–123 (RGQRTHTNARTRKGGSRLAVAAKKK).

It belongs to the universal ribosomal protein uS13 family. In terms of assembly, part of the 30S ribosomal subunit. Forms a loose heterodimer with protein S19. Forms two bridges to the 50S subunit in the 70S ribosome.

Its function is as follows. Located at the top of the head of the 30S subunit, it contacts several helices of the 16S rRNA. In the 70S ribosome it contacts the 23S rRNA (bridge B1a) and protein L5 of the 50S subunit (bridge B1b), connecting the 2 subunits; these bridges are implicated in subunit movement. Contacts the tRNAs in the A and P-sites. This chain is Small ribosomal subunit protein uS13, found in Anaplasma phagocytophilum (strain HZ).